The primary structure comprises 300 residues: MWFKNLQIYRLPAPWAITAEQLETDLAPHAFLPCSSLDMQSQGWVSPRENGALVYTLNKQIMLLLGTEKKLLPTTVINQVTKIKAAEIEEQQGFKPGRKQMKELKEDVTDELLPRAFSIWRQTWVWIDPVNGWLVVDAGSPAKADEVIKLLIKSVDKLPLDTLHVVQSPVAAMTQWLLTDEAPSGFTVDQDTELRSTGEGKATVRYVRHTLEAEDVQRHIAAGKQCTRLAMSWADKISFVLTESLAIKRVAPLDVIKENTDTTAQNDDERFDSDVMLMTGELSRMLADLVQALGGEQAKK.

Belongs to the RdgC family.

Its subcellular location is the cytoplasm. The protein localises to the nucleoid. Its function is as follows. May be involved in recombination. This is Recombination-associated protein RdgC from Herminiimonas arsenicoxydans.